Consider the following 217-residue polypeptide: Segregation and condensation protein B (217 aa).

It belongs to the ScpB family. In terms of assembly, homodimer. Homodimerization may be required to stabilize the binding of ScpA to the Smc head domains. Component of a cohesin-like complex composed of ScpA, ScpB and the Smc homodimer, in which ScpA and ScpB bind to the head domain of Smc. The presence of the three proteins is required for the association of the complex with DNA.

The protein resides in the cytoplasm. Its function is as follows. Participates in chromosomal partition during cell division. May act via the formation of a condensin-like complex containing Smc and ScpA that pull DNA away from mid-cell into both cell halves. This chain is Segregation and condensation protein B, found in Geobacillus kaustophilus (strain HTA426).